The following is a 460-amino-acid chain: Omega-3 fatty acid desaturase, chloroplastic (460 aa).

Residues 177-181 (HDCGH) carry the Histidine box-1 motif. The short motif at 213–217 (HRTHH) is the Histidine box-2 element. The short motif at 380–384 (HVIHH) is the Histidine box-3 element.

The protein belongs to the fatty acid desaturase type 1 family.

It localises to the plastid. The protein localises to the chloroplast membrane. It functions in the pathway lipid metabolism; polyunsaturated fatty acid biosynthesis. In terms of biological role, chloroplast omega-3 fatty acid desaturase introduces the third double bond in the biosynthesis of 16:3 and 18:3 fatty acids, important constituents of plant membranes. It is thought to use ferredoxin as an electron donor and to act on fatty acids esterified to galactolipids, sulfolipids and phosphatidylglycerol. In Ricinus communis (Castor bean), this protein is Omega-3 fatty acid desaturase, chloroplastic (FAD7A-1).